The following is a 138-amino-acid chain: MIATGAYLWTLREAIGLCRNDVAHEAGTNNVQIMRIEKGEIDTRGSLLLSVVRAVNFNAEHIAQLFLMLVATEEDGRNLAISWINRETTSAIDEFIADVKKDNKVSEALKLIQQLEALDPSSLDRLLGYGQSLLDRNR.

Positions 17 to 38 (LCRNDVAHEAGTNNVQIMRIEK) form a DNA-binding region, H-T-H motif.

This is an uncharacterized protein from Herpetosiphon aurantiacus (Herpetosiphon giganteus).